A 1669-amino-acid polypeptide reads, in one-letter code: Formin-like protein 12 (1669 aa).

Residues 5 to 193 (RRLFYRKPPD…QYICKMDDEL (189 aa)) enclose the Phosphatase tensin-type domain. Cysteine 126 acts as the Phosphocysteine intermediate in catalysis. The 140-residue stretch at 199–338 (PIPFTLDCVI…FKAEVLFSEF (140 aa)) folds into the C2 tensin-type domain. Disordered stretches follow at residues 688–709 (QGSSFQANGDPTCANTSTDANE), 1025–1240 (DAGP…GHGL), and 1631–1669 (IEADKKKAQKEAEKEANQDRTPVKSKDGLVDRSPRSPFK). The segment covering 1036–1050 (LEWKRCPHHPPERPH) has biased composition (basic and acidic residues). Pro residues-rich tracts occupy residues 1060-1069 (PSPPSPPPPQ), 1098-1127 (APPPPSIGAGAPPPPPPPGGITGVPPPPPI), 1136-1190 (PPAP…PPPR), and 1198-1230 (PPTPPGAPAPPMPPGVPGGPPPPPGGRGLPAPP). The FH2 domain maps to 1247–1646 (NSAATARRST…KAQKEAEKEA (400 aa)).

This sequence belongs to the formin-like family. Class-II subfamily.

This chain is Formin-like protein 12 (FH12), found in Oryza sativa subsp. japonica (Rice).